The following is a 185-amino-acid chain: MEGWDKGTKSVVGEIPLLSTRAGPRDGEAWRQRLKEEYRALIAYTSVNKSKDNDWFRISAANPEGTRWEGTCWYVHNLRRYEFPLQFDIPVAYPQVAPEIELPTLDGKTHKMYRGGKICLTVHFKPLWAKNCPRFGIAHALCLGLAPWLAAEVPILVDSGMVKHKDDEAAPADAAAAASGSAAAS.

The Glycyl thioester intermediate role is filled by Cys119.

This sequence belongs to the ubiquitin-conjugating enzyme family. UFC1 subfamily.

E2-like enzyme which forms an intermediate with UFM1 via a thioester linkage. In Oryza sativa subsp. japonica (Rice), this protein is Ubiquitin-fold modifier-conjugating enzyme 1.